Consider the following 163-residue polypeptide: Thiol peroxidase (163 aa).

Positions 16 to 162 (LQVGDKALDF…FEAAIAAAKA (147 aa)) constitute a Thioredoxin domain. Cys58 functions as the Cysteine sulfenic acid (-SOH) intermediate in the catalytic mechanism. A disulfide bridge connects residues Cys58 and Cys92.

The protein belongs to the peroxiredoxin family. Tpx subfamily. Homodimer.

The enzyme catalyses a hydroperoxide + [thioredoxin]-dithiol = an alcohol + [thioredoxin]-disulfide + H2O. Functionally, thiol-specific peroxidase that catalyzes the reduction of hydrogen peroxide and organic hydroperoxides to water and alcohols, respectively. Plays a role in cell protection against oxidative stress by detoxifying peroxides. This Streptococcus pneumoniae serotype 2 (strain D39 / NCTC 7466) protein is Thiol peroxidase.